Consider the following 860-residue polypeptide: MQEQYRPEEIESKVQLHWDEKRTFEVTEDESKEKYYCLSMLPYPSGRLHMGHVRNYTIGDVVARYQHMLGKNVLQPIGWDAFGLPAEGAAVKNNTAPAPWTYDNIAYMKNQLKTLGFGYDWSREIATCTPEYYRWEQKFFTELYKKGLVYKKTSAVNWCPNDQTVLANEQVIDGCCWRCDTKVERKEIPQWFIKITAYADELLRDLDKLDHWPDTVKTMQRNWIGRSEGVEITFDVKGYDNTLTVYTTRPDTFMGATYLAVAAGHPLAQKAAANNAELAAFIDECRNTKVAEAEMATMEKKGVDTGYKAIHPLTGEEIPVWAANFVLMEYGTGAVMAVPGHDQRDYEFASKYGLTIKPVILAADGSEPDLSEQALTEKGVLFNSGEFDGLAFEAAFNAIADKLAEKGVGERKVNYRLRDWGVSRQRYWGAPIPMVTLEDGTVLPTPEDQLPVILPEDVVMDGITSPIKADPEWAKTTVNGMPALRETDTFDTFMESSWYYARYTCPQYQEGMLDSKAANYWLPVDIYIGGIEHAIMHLLYFRFFHKLMRDAGMVTSDEPAKQLLCQGMVLADAFYYVGENGERNWVSPVDAIVERDEKGRIVKAKDAAGHELVYTGMSKMSKSKNNGIDPQVMVERYGADTVRLFMMFASPADMTLEWQESGVEGANRFIKRVWKLVYEHTAKGPVAALNVDALSEDQKALRRDVHKTIAKVTDDIGRRQTFNTAIAAIMELMNKLAKAPQEGEQDRALLQEALQAVVRMLNPFTPHVCFTLWQELGGEGDIDNAPWPVADEQAMVENTTLVVVQVNGKVRGKITVAVDATEEQVRERAGQEHLVAKYLDGVTVRKVIYVPGKLLNLVVG.

The 'HIGH' region motif lies at P42–H52. The 'KMSKS' region signature appears at K619–S623. K622 is an ATP binding site.

Belongs to the class-I aminoacyl-tRNA synthetase family.

The protein localises to the cytoplasm. It carries out the reaction tRNA(Leu) + L-leucine + ATP = L-leucyl-tRNA(Leu) + AMP + diphosphate. This Salmonella typhi protein is Leucine--tRNA ligase.